A 183-amino-acid polypeptide reads, in one-letter code: MTATAQQLEFLKNSIKSIHDYPKPGILFRDVTSLLEDPKAYALSIELLVERYKNAGITKVVGTEARGFLFGAPVALGLGVGFVPVRKPRKLPRETIAESYELEYGTDQLEIHVDAIKPGDKVLVVDDLLATGGTIEATVKLIRRLGGEVTDAAFIINLFDLGGEQRLAKQGITCYSLVPFPGH.

The protein belongs to the purine/pyrimidine phosphoribosyltransferase family. In terms of assembly, homodimer.

It localises to the cytoplasm. It catalyses the reaction AMP + diphosphate = 5-phospho-alpha-D-ribose 1-diphosphate + adenine. It functions in the pathway purine metabolism; AMP biosynthesis via salvage pathway; AMP from adenine: step 1/1. Functionally, catalyzes a salvage reaction resulting in the formation of AMP, that is energically less costly than de novo synthesis. In Citrobacter koseri (strain ATCC BAA-895 / CDC 4225-83 / SGSC4696), this protein is Adenine phosphoribosyltransferase.